Consider the following 210-residue polypeptide: Orotate phosphoribosyltransferase (210 aa).

5-phospho-alpha-D-ribose 1-diphosphate contacts are provided by residues arginine 94, lysine 98, histidine 100, and 120 to 128; that span reads EDLISTGGS. Serine 124 is an orotate binding site.

The protein belongs to the purine/pyrimidine phosphoribosyltransferase family. PyrE subfamily. Homodimer. Requires Mg(2+) as cofactor.

It catalyses the reaction orotidine 5'-phosphate + diphosphate = orotate + 5-phospho-alpha-D-ribose 1-diphosphate. It participates in pyrimidine metabolism; UMP biosynthesis via de novo pathway; UMP from orotate: step 1/2. Catalyzes the transfer of a ribosyl phosphate group from 5-phosphoribose 1-diphosphate to orotate, leading to the formation of orotidine monophosphate (OMP). This is Orotate phosphoribosyltransferase from Bacillus anthracis (strain A0248).